The primary structure comprises 222 residues: Ribosomal RNA small subunit methyltransferase G (222 aa).

S-adenosyl-L-methionine contacts are provided by residues G82, L87, 132–133, and R150; that span reads AE.

This sequence belongs to the methyltransferase superfamily. RNA methyltransferase RsmG family.

Its subcellular location is the cytoplasm. Specifically methylates the N7 position of guanine in position 518 of 16S rRNA. The polypeptide is Ribosomal RNA small subunit methyltransferase G (Corynebacterium jeikeium (strain K411)).